The sequence spans 389 residues: Probable nitrate transporter NarT (389 aa).

The next 12 helical transmembrane spans lie at 14 to 34, 45 to 65, 69 to 89, 97 to 117, 139 to 159, 161 to 181, 211 to 231, 246 to 266, 268 to 288, 294 to 314, 331 to 351, and 353 to 373; these read TLSL…MPFI, ISII…PFGY, IVGA…PIFF, GMLM…SVGV, GNIG…IIGW, TTVR…FIFG, WYFI…NYLV, GVFI…GDKF, AVKV…ILGI, LFTV…GLIF, IVSM…TYVA, and LTGS…IALF.

The protein belongs to the major facilitator superfamily. Nitrate/nitrite porter (TC 2.A.1.8) family.

Its subcellular location is the cell membrane. Its function is as follows. Probably required for nitrate uptake under anoxic conditions. Also possibly involved in excretion of nitrite produced by the dissimilatory reduction of nitrate. This is Probable nitrate transporter NarT (narT) from Staphylococcus aureus (strain MRSA252).